The sequence spans 327 residues: Serine/threonine-protein phosphatase 4 regulatory subunit ppfr-4 (327 aa).

Residues 141–185 (KLAVEEIRRLKLERHKKKQELKMAELRIQKQLEAVSIDEQNLREL) are a coiled coil. The tract at residues 271–327 (KFGHNPQNAPQSSAPAGAEAQESEEEVDDDEARAKAMRWDEYKDDHRRGWGNMHNKG) is disordered. A compositionally biased stretch (polar residues) spans 275 to 284 (NPQNAPQSSA). The span at 291 to 301 (QESEEEVDDDE) shows a compositional bias: acidic residues. Residues 302 to 318 (ARAKAMRWDEYKDDHRR) show a composition bias toward basic and acidic residues.

In terms of assembly, serine/threonine-protein phosphatase 4 (PP4) occurs in different assemblies of the catalytic and one or more regulatory subunits. The catalytic subunit is likely to be pph-4.1.

In terms of biological role, probable regulatory subunit of serine/threonine-protein phosphatase PP4 which may play a role in meiosis and embryonic mitosis. Probably in association with catalytic subunit pph-4.1, regulates microtubule severing during oocyte meiosis II by dephosphorylating and likely activating mei-1, a component of the katanin microtubule severing complex. The chain is Serine/threonine-protein phosphatase 4 regulatory subunit ppfr-4 from Caenorhabditis elegans.